A 614-amino-acid chain; its full sequence is DNA mismatch repair protein MutL (614 aa).

The protein belongs to the DNA mismatch repair MutL/HexB family.

Its function is as follows. This protein is involved in the repair of mismatches in DNA. It is required for dam-dependent methyl-directed DNA mismatch repair. May act as a 'molecular matchmaker', a protein that promotes the formation of a stable complex between two or more DNA-binding proteins in an ATP-dependent manner without itself being part of a final effector complex. This is DNA mismatch repair protein MutL from Leptospira biflexa serovar Patoc (strain Patoc 1 / ATCC 23582 / Paris).